The primary structure comprises 265 residues: S-acyl fatty acid synthase thioesterase, medium chain (265 aa).

N-acetylmethionine is present on methionine 1. Residues serine 101 and histidine 237 contribute to the active site.

Belongs to the thioesterase family. As to quaternary structure, interacts (via C-terminus) with FASN. Detected both in lactating and non-lactating breast epithelium (at protein level). Isoform 2 is up-regulated in bone marrow-derived mononuclear cells of rheumatoid arthritis patients.

The protein resides in the cytoplasm. The protein localises to the cytosol. It catalyses the reaction (9Z)-octadecenoyl-[ACP] + H2O = (9Z)-octadecenoate + holo-[ACP] + H(+). The catalysed reaction is decanoyl-CoA + H2O = decanoate + CoA + H(+). It carries out the reaction dodecanoyl-CoA + H2O = dodecanoate + CoA + H(+). The enzyme catalyses tetradecanoyl-CoA + H2O = tetradecanoate + CoA + H(+). It catalyses the reaction hexadecanoyl-CoA + H2O = hexadecanoate + CoA + H(+). Contributes to the release of free fatty acids from fatty acid synthase (FASN). Has broad substrate specificity, giving rise to a range of free fatty acids with chain lengths between 10 and 16 carbon atoms (C10 - C16). The sequence is that of S-acyl fatty acid synthase thioesterase, medium chain from Homo sapiens (Human).